Reading from the N-terminus, the 491-residue chain is Chromosomal replication initiator protein DnaA (491 aa).

Residues 1 to 69 (MTTWDKCLKK…TIQECHGNDL (69 aa)) form a domain I, interacts with DnaA modulators region. The interval 69–154 (LIIEYSNKKF…KEDEEYSFGL (86 aa)) is domain II. Residues 155–371 (PLKEKYVFDS…GALNRVLTTS (217 aa)) are domain III, AAA+ region. 4 residues coordinate ATP: glycine 199, glycine 201, lysine 202, and threonine 203. The interval 372 to 491 (KFNHKDPTIE…YELLLDKISR (120 aa)) is domain IV, binds dsDNA.

Belongs to the DnaA family. As to quaternary structure, oligomerizes as a right-handed, spiral filament on DNA at oriC.

The protein resides in the cytoplasm. Its function is as follows. Plays an essential role in the initiation and regulation of chromosomal replication. ATP-DnaA binds to the origin of replication (oriC) to initiate formation of the DNA replication initiation complex once per cell cycle. Binds the DnaA box (a 9 base pair repeat at the origin) and separates the double-stranded (ds)DNA. Forms a right-handed helical filament on oriC DNA; dsDNA binds to the exterior of the filament while single-stranded (ss)DNA is stabiized in the filament's interior. The ATP-DnaA-oriC complex binds and stabilizes one strand of the AT-rich DNA unwinding element (DUE), permitting loading of DNA polymerase. After initiation quickly degrades to an ADP-DnaA complex that is not apt for DNA replication. Binds acidic phospholipids. This chain is Chromosomal replication initiator protein DnaA, found in Francisella tularensis subsp. holarctica (strain FTNF002-00 / FTA).